A 180-amino-acid chain; its full sequence is MSALTIYSDKDASQPQWHSTDAAEIAQQLNAKGVRFERWVADRDLGQAPAPETVITAYQHAIDKLVAEKGYQSWDVISLRADNPQKEALRAKFLNEHTHGEDEVRFFVEGAGLFCLHIGDQVYQVLCEKNDLISVPAGTPHWFDMGSEPNFTAIRIFDNPEGWVAQFTGDAIADAYPRLL.

His-97, His-99, Glu-103, and His-141 together coordinate Fe(2+). 4 residues coordinate Ni(2+): His-97, His-99, Glu-103, and His-141.

The protein belongs to the acireductone dioxygenase (ARD) family. As to quaternary structure, monomer. Fe(2+) serves as cofactor. Requires Ni(2+) as cofactor.

The enzyme catalyses 1,2-dihydroxy-5-(methylsulfanyl)pent-1-en-3-one + O2 = 3-(methylsulfanyl)propanoate + CO + formate + 2 H(+). It carries out the reaction 1,2-dihydroxy-5-(methylsulfanyl)pent-1-en-3-one + O2 = 4-methylsulfanyl-2-oxobutanoate + formate + 2 H(+). The protein operates within amino-acid biosynthesis; L-methionine biosynthesis via salvage pathway; L-methionine from S-methyl-5-thio-alpha-D-ribose 1-phosphate: step 5/6. Catalyzes 2 different reactions between oxygen and the acireductone 1,2-dihydroxy-3-keto-5-methylthiopentene (DHK-MTPene) depending upon the metal bound in the active site. Fe-containing acireductone dioxygenase (Fe-ARD) produces formate and 2-keto-4-methylthiobutyrate (KMTB), the alpha-ketoacid precursor of methionine in the methionine recycle pathway. Ni-containing acireductone dioxygenase (Ni-ARD) produces methylthiopropionate, carbon monoxide and formate, and does not lie on the methionine recycle pathway. This chain is Acireductone dioxygenase, found in Citrobacter koseri (strain ATCC BAA-895 / CDC 4225-83 / SGSC4696).